The primary structure comprises 291 residues: Mitochondrial thiamine pyrophosphate carrier 1 (291 aa).

Helical transmembrane passes span 12 to 31, 83 to 99, 120 to 141, 167 to 191, 214 to 230, and 265 to 282; these read GATASVYHTLVAGSVSGAVA, IMYILYGATQFTSYSMF, SLIVGTSAGLTSLIVTYPFDLL, GGLAGLYMGAKPTLLSLGLNSGLMF, FCGFFAGASSKGITFPL, and GFGISLIKTAPTSAVSLF. Solcar repeat units lie at residues 15–102, 115–200, and 207–290; these read ASVY…FSKA, RPSN…AREV, and NIPF…VLNG.

It belongs to the mitochondrial carrier (TC 2.A.29) family.

It localises to the mitochondrion inner membrane. Its function is as follows. Mitochondrial transporter that mediates uptake of thiamine pyrophosphate (ThPP) into mitochondria. In Meyerozyma guilliermondii (strain ATCC 6260 / CBS 566 / DSM 6381 / JCM 1539 / NBRC 10279 / NRRL Y-324) (Yeast), this protein is Mitochondrial thiamine pyrophosphate carrier 1 (TPC1).